Here is a 174-residue protein sequence, read N- to C-terminus: ATP-dependent protease subunit HslV (174 aa).

Residue Thr-4 is part of the active site. Residues Ala-159, Cys-162, and Thr-165 each contribute to the Na(+) site.

This sequence belongs to the peptidase T1B family. HslV subfamily. As to quaternary structure, a double ring-shaped homohexamer of HslV is capped on each side by a ring-shaped HslU homohexamer. The assembly of the HslU/HslV complex is dependent on binding of ATP.

The protein resides in the cytoplasm. It catalyses the reaction ATP-dependent cleavage of peptide bonds with broad specificity.. Its activity is regulated as follows. Allosterically activated by HslU binding. In terms of biological role, protease subunit of a proteasome-like degradation complex believed to be a general protein degrading machinery. This is ATP-dependent protease subunit HslV from Moorella thermoacetica (strain ATCC 39073 / JCM 9320).